Consider the following 200-residue polypeptide: 3-isopropylmalate dehydratase small subunit (200 aa).

Belongs to the LeuD family. LeuD type 1 subfamily. In terms of assembly, heterodimer of LeuC and LeuD.

The enzyme catalyses (2R,3S)-3-isopropylmalate = (2S)-2-isopropylmalate. Its pathway is amino-acid biosynthesis; L-leucine biosynthesis; L-leucine from 3-methyl-2-oxobutanoate: step 2/4. Catalyzes the isomerization between 2-isopropylmalate and 3-isopropylmalate, via the formation of 2-isopropylmaleate. The polypeptide is 3-isopropylmalate dehydratase small subunit (Campylobacter jejuni subsp. jejuni serotype O:6 (strain 81116 / NCTC 11828)).